The primary structure comprises 237 residues: Ribosomally synthesized cyclic peptide ustiloxin B precursosr (237 aa).

An N-terminal signal peptide occupies residues 1 to 19 (MKLILTLLVSGLCALAAPA). 2 consecutive propeptides follow at residues 20–22 (AKR) and 234–237 (HGGH).

In terms of processing, ustA is processed by the subtilisin-like endoprotease kex2 that is outside the ustiloxin B gene cluster, at the C-terminal side of Arg-Lys, after transfer to Golgi apparatus through the endoplasmic reticulum (ER). Cleavage by kex2 generates 16 peptides YAIG-I to YAIG-XVI. To process the precursor peptide further, at least two peptidases are necessary to cleave the N-terminal and C-terminal sides of the Tyr-Ala-Ile-Gly core peptide which serves as backbone for the synthesis of ustiloxin B, through cyclization and modification of the tyrosine. One of the two peptidases must be the serine peptidase ustP; and the other pepdidase is probably ustH. Macrocyclization of the core peptide derived from ustA requires the tyrosinase ustQ, as well as the homologous oxidases ustYa and ustYb, and leads to the production of the first cyclization product N-desmethylustiloxin F. For the formation of N-desmethylustiloxin F, three oxidation steps are required, hydroxylation at the benzylic position, hydroxylation at either the aromatic ring of Tyr or beta-position of Ile, and oxidative cyclization. UstQ may catalyze the oxidation of a phenol moiety, whereas the ustYa and ustYb are most likely responsible for the remaining two-step oxidations. N-desmethylustiloxin F is then methylated by ustM to yield ustiloxin F which in turn substrate of the cytochrome P450 monooxygenase ustC which catalyzes the formation of S-deoxyustiloxin H. The flavoprotein monooxygenases ustF1 and ustF2 then participate in the modification of the side chain of S-deoxyustiloxin H, leading to the synthesis of an oxime intermediate, via ustiloxin H. Finally, carboxylative dehydration performed by the cysteine desulfurase-like protein ustD yields ustiloxin B.

It participates in mycotoxin biosynthesis. In terms of biological role, ribosomally synthesized cyclic peptide ustiloxin B precursor: Part of the gene cluster that mediates the biosynthesis of the secondary metabolite ustiloxin B, an antimitotic tetrapeptide. The ustA translated product contains a 16-fold repeated peptide embedding the tetrapeptide Tyr-Ala-Ile-Gly, that is converted into the cyclic moiety of ustiloxin B. The polypeptide is Ribosomally synthesized cyclic peptide ustiloxin B precursosr (Aspergillus flavus (strain ATCC 200026 / FGSC A1120 / IAM 13836 / NRRL 3357 / JCM 12722 / SRRC 167)).